The following is a 156-amino-acid chain: MRALLQRVSAASVTVDNAVIGEIGPGLLVFVCAMRGDSEAEATQLVQKIARLRIFRDDAGKMNRSVSDTSGAVLVVSQFTLGADTRSGTRPGFSKAAAPDEGMRLYHCFCAKMRETGLTVQTGEFGADMKVSLVNDGPVTLWLDTDDRRNTSAGSG.

The Gly-cisPro motif, important for rejection of L-amino acids signature appears at 137 to 138 (GP).

This sequence belongs to the DTD family. As to quaternary structure, homodimer.

The protein localises to the cytoplasm. It catalyses the reaction glycyl-tRNA(Ala) + H2O = tRNA(Ala) + glycine + H(+). The enzyme catalyses a D-aminoacyl-tRNA + H2O = a tRNA + a D-alpha-amino acid + H(+). An aminoacyl-tRNA editing enzyme that deacylates mischarged D-aminoacyl-tRNAs. Also deacylates mischarged glycyl-tRNA(Ala), protecting cells against glycine mischarging by AlaRS. Acts via tRNA-based rather than protein-based catalysis; rejects L-amino acids rather than detecting D-amino acids in the active site. By recycling D-aminoacyl-tRNA to D-amino acids and free tRNA molecules, this enzyme counteracts the toxicity associated with the formation of D-aminoacyl-tRNA entities in vivo and helps enforce protein L-homochirality. In Ruegeria sp. (strain TM1040) (Silicibacter sp.), this protein is D-aminoacyl-tRNA deacylase.